A 311-amino-acid chain; its full sequence is MAIKKITIVGAGRVGEATAQFLVKNELCRELVLLDAQEGVAQGAALDIQQSAPLFDFDARVTGSTNYELIADSDLVVITAGKPRKPGMSRSDVLDSNLPIITDIMNNVMRFAPQSLVMIVTNPVDVLTYHAWRHCGWDRARVFGQAGVLDSARMASFIAGETGLSVKDISAMVLGGHGDTMLPLIRYTTISGIPLTHFLDQQVIEKIIERTRHGGFEILRLRQTSSAYDAPAAAIAGMVDAIRHNRKRILPCVAILQGEYGENEVAMGVPSVLGGDGLERIVELPLTEEEQEQFKHSVEAIRTDLAHLARA.

NAD(+) is bound by residues 10 to 15 (GAGRVG) and Asp35. Substrate-binding residues include Arg84 and Arg90. NAD(+)-binding positions include Asn97 and 120 to 122 (VTN). Asn122 and Arg153 together coordinate substrate. His177 serves as the catalytic Proton acceptor.

It belongs to the LDH/MDH superfamily. MDH type 3 family.

The enzyme catalyses (S)-malate + NAD(+) = oxaloacetate + NADH + H(+). Catalyzes the reversible oxidation of malate to oxaloacetate. This Nitrosococcus oceani (strain ATCC 19707 / BCRC 17464 / JCM 30415 / NCIMB 11848 / C-107) protein is Malate dehydrogenase.